The primary structure comprises 938 residues: Myocardin (938 aa).

Positions 12 to 27 (IRRKFRSVLQLRLQQR) match the MEF2C-binding motif. RPEL repeat units follow at residues 18-43 (SVLQLRLQQRRTQEQLANQGLIPPLK), 62-87 (DSLRRKVRNRSDRASLVNMHILQAST), and 106-131 (DDLNEKIALRPGPLELVEKNILPMDS). Residues 37 to 64 (GLIPPLKSPTEFHDPRKKLDSAKTEDSL) are disordered. Residues 46–64 (TEFHDPRKKLDSAKTEDSL) are compositionally biased toward basic and acidic residues. The tract at residues 153–205 (FEDDSSRDGLSPDQARSEDPQGSGGSTPDIKSTEAPLAGPLDTIQDLTPGSES) is HDAC5-binding. Disordered regions lie at residues 155 to 282 (DDSS…PPPM) and 339 to 381 (NEQM…PLPP). Positions 210–221 (TASQLSNQSDSG) are enriched in polar residues. Residues 248 to 265 (NRHKKPKDPKPKVKKLKY) are compositionally biased toward basic residues. Residues 345 to 360 (NPNSSSTPLNNTPLSP) show a composition bias toward low complexity. Residues 361-372 (VKNSLSGQTGVS) show a composition bias toward polar residues. Residues 383–417 (LDDLKVSELRQQLRIRGLPVSGTKTALVDRLRPFQ) enclose the SAP domain. S457, S461, S465, and S469 each carry phosphoserine; by GSK3-beta. Residues 501 to 521 (ESLLSSLNGGSGPSEPDGLDS) form a disordered region. The stretch at 522 to 566 (EKDKMLVEKQKVINQLTWKLRQEQRQVEELRMQLQKQKSGCNDQK) forms a coiled coil. A disordered region spans residues 586 to 606 (AAQQASGKGQGHSSDSPPPAC). A compositionally biased stretch (polar residues) spans 588–600 (QQASGKGQGHSSD). Phosphoserine; by GSK3-beta occurs at positions 627, 631, 635, and 639. Polar residues-rich tracts occupy residues 667–694 (GAQRENHGVSSPNSSQGCAQMTGLQSSD) and 701–713 (SIPSPTFPKSSPT). Residues 667–734 (GAQRENHGVS…DAVKQQMTRS (68 aa)) are disordered. The tract at residues 717 to 938 (ITQPPSYEDA…SPMDLHLQQW (222 aa)) is required for interaction with and ubiquitination by STUB1. Phosphoserine; by MAPK1 and MAPK3 is present on residues S815, S862, and S869. T896 carries the phosphothreonine; by MAPK1 and MAPK3 modification.

In terms of assembly, homodimer. Interacts with MLLT7/FOXO4. Interacts with SRF, its association does not depend on specific DNA sequences for ternary complex formation. Interacts (via C-terminal) with EP300 (via the CREB-binding domain). Interacts with HDAC4 and HDAC5. Interacts with MEF2C. Interacts (via C-terminus) with STUB1/CHIP. Interacts with PURB. Ubiquitinated; by STUB1/CHIP at the C-terminus, leading to its degradation by the proteasome. Phosphorylation by GSK3B is required for STUB1/CHIP-mediated ubiquitination. In terms of processing, phosphorylation negatively regulates transcriptional activity. Phosphorylated; by GSK3B. Abundantly expressed in the heart, aorta media and bladder, weakly expressed in the stomach, intestine and lung.

Its subcellular location is the nucleus. Functionally, smooth muscle cells (SM) and cardiac muscle cells-specific transcriptional factor which uses the canonical single or multiple CArG boxes DNA sequence. Acts as a cofactor of serum response factor (SRF) with the potential to modulate SRF-target genes. Plays a crucial role in cardiogenesis, urinary bladder development, and differentiation of the smooth muscle cell lineage (myogenesis). Positively regulates the transcription of genes involved in vascular smooth muscle contraction. The protein is Myocardin (Myocd) of Rattus norvegicus (Rat).